The sequence spans 205 residues: CASP-like protein 2A1 (205 aa).

Residues 1-35 (MMGDKGEKECATASSPIELGCGEGDESGNKSSMRT) are Cytoplasmic-facing. The chain crosses the membrane as a helical span at residues 36–56 (VETLLRLVPVALCTVSLVVML). Residues 57 to 77 (KNSQTNDFGSLSYSDLGAFRY) lie on the Extracellular side of the membrane. The helical transmembrane segment at 78–98 (LVHANGICAGYSLLSAIFTAM) threads the bilayer. Topologically, residues 99–106 (PRPPTMSR) are cytoplasmic. The chain crosses the membrane as a helical span at residues 107–127 (AWTFFLLDQVLTYLILAAGAV). Residues 128-157 (STEVVYLAYKGDEAVTWSDACSSFGGFCQK) lie on the Extracellular side of the membrane. The chain crosses the membrane as a helical span at residues 158-178 (TTASISITFVTVLCYAVLSLI). Residues 179–205 (SSYKLFSKYDAPICFNGKGIEIAAFHS) lie on the Cytoplasmic side of the membrane.

The protein belongs to the Casparian strip membrane proteins (CASP) family. Homodimer and heterodimers.

The protein resides in the cell membrane. The sequence is that of CASP-like protein 2A1 from Vitis vinifera (Grape).